A 312-amino-acid polypeptide reads, in one-letter code: Apulose-4-phosphate transketolase subunit B (312 aa).

The protein belongs to the transketolase family. In terms of assembly, probable heterodimer composed of AptA and AptB. Thiamine diphosphate is required as a cofactor.

The catalysed reaction is apulose 4-phosphate + D-glyceraldehyde 3-phosphate = D-xylulose 5-phosphate + dihydroxyacetone phosphate. The protein operates within carbohydrate metabolism. Functionally, involved in catabolism of D-apiose. Catalyzes the transfer of the glycolaldehyde group from apulose-4-phosphate to D-glyceraldehyde 3-phosphate, generating dihydroxyacetone phosphate and D-xylulose-5-phosphate. This is Apulose-4-phosphate transketolase subunit B from Phocaeicola vulgatus (strain ATCC 8482 / DSM 1447 / JCM 5826 / CCUG 4940 / NBRC 14291 / NCTC 11154) (Bacteroides vulgatus).